The following is a 445-amino-acid chain: C-terminal-binding protein 2 (445 aa).

Position 22 is an asymmetric dimethylarginine (R22). NAD(+) contacts are provided by residues S106, 186-191, D210, 243-249, 270-272, and D296; these read IGFGRT, CNLNEHN, and AAR. R272 is a catalytic residue. E301 is an active-site residue. The active-site Proton donor is H321. 321 to 324 is a binding site for NAD(+); sequence HTAW. Residues 414-445 are disordered; that stretch reads THNLPTVAHPSQAPSPNQPTKHGDNREHPNEQ. The residue at position 428 (S428) is a Phosphoserine. The segment covering 434–445 has biased composition (basic and acidic residues); the sequence is KHGDNREHPNEQ.

This sequence belongs to the D-isomer specific 2-hydroxyacid dehydrogenase family. As to quaternary structure, interacts with the C-terminus of adenovirus E1A protein. Can form homodimers or heterodimers of CTBP1 and CTBP2. Interacts with HIPK2. Interacts with ZNF217, PNN, NRIP1 and WIZ. Interacts with PRDM16; represses white adipose tissue (WAT)-specific genes expression. Interacts with MCRIP1. In terms of tissue distribution, isoform 2 is specifically localized in synaptic ribbon (at protein level).

The protein localises to the nucleus. The protein resides in the synapse. Corepressor targeting diverse transcription regulators. Functions in brown adipose tissue (BAT) differentiation. Isoform 2 probably acts as a scaffold for specialized synapses. The chain is C-terminal-binding protein 2 (CTBP2) from Bos taurus (Bovine).